The chain runs to 80 residues: DNA-directed RNA polymerase subunit Rpo5 (80 aa).

It belongs to the archaeal Rpo5/eukaryotic RPB5 RNA polymerase subunit family. Part of the RNA polymerase complex.

Its subcellular location is the cytoplasm. It carries out the reaction RNA(n) + a ribonucleoside 5'-triphosphate = RNA(n+1) + diphosphate. Functionally, DNA-dependent RNA polymerase (RNAP) catalyzes the transcription of DNA into RNA using the four ribonucleoside triphosphates as substrates. The sequence is that of DNA-directed RNA polymerase subunit Rpo5 from Thermofilum pendens (strain DSM 2475 / Hrk 5).